The primary structure comprises 239 residues: Gamma-lactamase MBL2 (239 aa).

Zn(2+) contacts are provided by H56, H58, D60, H61, H141, and D165.

This sequence belongs to the metallo-beta-lactamase superfamily.

Its function is as follows. Gamma-lactamase; part of the Fusarium detoxification of benzoxazolinone cluster 2 (FDB2) involved in the degradation of benzoxazolinones produced by the host plant. Maize, wheat, and rye produce the 2 benzoxazinone phytoanticipins 2,4-dihy-droxy-7-methoxy-1,4-benzoxazin-3-one (DIMBOA) and 2,4-dihydroxy-1,4-benzoxazin-3-one (DIBOA) that, due to their inherent instability once released, spontaneously degrade to the more stable corresponding benzoxazolinones, 6-methoxy-2-benzoxazolinone (MBOA) and 2-benzoxazolinone (BOA), respectively. The first step in the detoxification of benzoxazolinones involves the hydrolysis of the cyclic ester bond of benzoxazolinones by the FDB1 cluster gamma-lactamase MBL1 to aminophenols. MBL1 is able to convert BOA into 2-aminophenol (2-AP), as well as MBOA into 5-methoxy-2-aminophenol (2-AMP). The FDB2 cluster N-malonyltransferase FDB2/NAT1 then metabolizes aminophenols via N-malonylation to non-toxic malonamic acids. FDB2/NAT1 converts 2-AP into N-(2-hydroxyphenyl) malonamic acid (HPMA) and 2-AMP into N-(2-hydroxy-4-methoxyphenyl) malonamic acid (HMPMA). The duplicated dienlactone hydrolases DLH1 and DLH2 may provide redundant function for hydrolyzing the lactone moiety in the BOA molecule. The roles of the amidases and other enzymes encoded by the 2 FDB clusters have not been identified so far. In Gibberella moniliformis (strain M3125 / FGSC 7600) (Maize ear and stalk rot fungus), this protein is Gamma-lactamase MBL2.